The primary structure comprises 583 residues: Laminarase-resistance protein LRE1 (583 aa).

Residues 1–24 (MPNTHTQHVQISEPNPVNTLSTPS) are compositionally biased toward polar residues. Disordered stretches follow at residues 1–31 (MPNT…HRHR) and 330–380 (LKDN…HMQH). Composition is skewed to basic and acidic residues over residues 332 to 342 (DNPRYAKDGYP) and 354 to 366 (LDSD…SGES). Residues Ser393 and Ser398 each carry the phosphoserine modification. Residues 457-486 (SCTPDGKEEMNRLKSNDSNEYSKSEGQIRT) are disordered. Residues 461-479 (DGKEEMNRLKSNDSNEYSK) are compositionally biased toward basic and acidic residues. A phosphoserine mark is found at Ser516 and Ser552.

In terms of processing, phosphorylated by CDC28/CDK1.

Functionally, overexpression affects chitinase expression, cell separation and budding pattern, and increases trehalose accumulation and heat resistance by inhibiting protein kinase CBK1. Overexpression also suppresses temperature-induced hyperosmosensitivity and sensitivity to cell wall degrading enzymes. Overexpression of both LRE1 and PBN1 confers resistance to laminarinase. In Saccharomyces cerevisiae (strain ATCC 204508 / S288c) (Baker's yeast), this protein is Laminarase-resistance protein LRE1 (LRE1).